The chain runs to 411 residues: Diels-Alderase ffsF (411 aa).

A signal peptide spans 1–17 (MTQIKLLLLSLAITAQS).

It belongs to the Diels-Alderase family.

It participates in mycotoxin biosynthesis. Diels-Alderase; part of the gene cluster that mediates the biosynthesis of the cytotoxic leucine-containing cytochalasans, including aspochalasin C, aspochalasin E, TMC-169, flavichalasine F, aspergillin PZ, aspochalasin M and flavichalasine G. The first step in the pathway is catalyzed by the hybrid PKS-NRPS ffsA that utilizes 8 units of malonyl-CoA to iteratively assemble the octaketide chain before addition of L-leucine by the C-terminal NRPS modules. Because ffsA lacks a designated enoylreductase (ER) domain, the required activity is provided the enoyl reductase fssC. The methyltransferase (MT) domain of ffsA catalyzes the alpha-methylation at C10 and C14 using S-adenosyl-L-methionine as the methyl-donating cosubstrate. Reduction by the hydrolyase ffsE, followed by dehydration and intra-molecular Diels-Alder cyclization by the Diels-Alderase ffsF then yield the required isoindolone-fused macrocycle. A number of oxidative steps catalyzed by the tailoring cytochrome P450 monooxygenase ffsD, the FAD-linked oxidoreductase ffsJ and the short-chain dehydrogenase/reductase ffsI, are further required to afford the final products. The polypeptide is Diels-Alderase ffsF (Aspergillus flavipes).